Here is a 419-residue protein sequence, read N- to C-terminus: Tyrosine--tRNA ligase (419 aa).

Y34 lines the L-tyrosine pocket. Residues 39-48 carry the 'HIGH' region motif; it reads PSGDSMHIGH. L-tyrosine-binding residues include Y168 and Q172. Residues 230-234 carry the 'KMSKS' region motif; that stretch reads KFGKS. Residue K233 coordinates ATP. An S4 RNA-binding domain is found at 352–418; that stretch reads ANLVDWLVTL…GKKKYFLVSY (67 aa).

The protein belongs to the class-I aminoacyl-tRNA synthetase family. TyrS type 1 subfamily. As to quaternary structure, homodimer.

Its subcellular location is the cytoplasm. It catalyses the reaction tRNA(Tyr) + L-tyrosine + ATP = L-tyrosyl-tRNA(Tyr) + AMP + diphosphate + H(+). Its function is as follows. Catalyzes the attachment of tyrosine to tRNA(Tyr) in a two-step reaction: tyrosine is first activated by ATP to form Tyr-AMP and then transferred to the acceptor end of tRNA(Tyr). The protein is Tyrosine--tRNA ligase of Listeria monocytogenes serovar 1/2a (strain ATCC BAA-679 / EGD-e).